The sequence spans 431 residues: Enolase (431 aa).

Residue Q166 participates in (2R)-2-phosphoglycerate binding. E208 acts as the Proton donor in catalysis. The Mg(2+) site is built by D245, E288, and D315. Residues K340, R369, S370, and K391 each contribute to the (2R)-2-phosphoglycerate site. Catalysis depends on K340, which acts as the Proton acceptor.

This sequence belongs to the enolase family. It depends on Mg(2+) as a cofactor.

It localises to the cytoplasm. Its subcellular location is the secreted. It is found in the cell surface. It catalyses the reaction (2R)-2-phosphoglycerate = phosphoenolpyruvate + H2O. Its pathway is carbohydrate degradation; glycolysis; pyruvate from D-glyceraldehyde 3-phosphate: step 4/5. In terms of biological role, catalyzes the reversible conversion of 2-phosphoglycerate (2-PG) into phosphoenolpyruvate (PEP). It is essential for the degradation of carbohydrates via glycolysis. This chain is Enolase, found in Clostridium botulinum (strain ATCC 19397 / Type A).